The sequence spans 160 residues: Putative 4-hydroxy-4-methyl-2-oxoglutarate aldolase (160 aa).

Substrate-binding positions include 75–78 (GDLI) and arginine 97. Residue aspartate 98 coordinates a divalent metal cation.

Belongs to the class II aldolase/RraA-like family. In terms of assembly, homotrimer. Requires a divalent metal cation as cofactor.

The catalysed reaction is 4-hydroxy-4-methyl-2-oxoglutarate = 2 pyruvate. It carries out the reaction oxaloacetate + H(+) = pyruvate + CO2. In terms of biological role, catalyzes the aldol cleavage of 4-hydroxy-4-methyl-2-oxoglutarate (HMG) into 2 molecules of pyruvate. Also contains a secondary oxaloacetate (OAA) decarboxylase activity due to the common pyruvate enolate transition state formed following C-C bond cleavage in the retro-aldol and decarboxylation reactions. The chain is Putative 4-hydroxy-4-methyl-2-oxoglutarate aldolase from Rhodospirillum centenum (strain ATCC 51521 / SW).